An 85-amino-acid polypeptide reads, in one-letter code: Glutaredoxin (85 aa).

The region spanning 1 to 85 is the Glutaredoxin domain; it reads MQTVTMYTGP…EGGLDGLLNP (85 aa). Cys12 and Cys15 are joined by a disulfide.

It belongs to the glutaredoxin family. As to quaternary structure, monomer.

The protein localises to the cytoplasm. In terms of biological role, has a glutathione-disulfide oxidoreductase activity in the presence of NADPH and glutathione reductase. Reduces low molecular weight disulfides and proteins. This is Glutaredoxin (grx) from Neisseria meningitidis serogroup B (strain ATCC BAA-335 / MC58).